The chain runs to 454 residues: tRNA modification GTPase MnmE (454 aa).

Arginine 23, glutamate 80, and lysine 120 together coordinate (6S)-5-formyl-5,6,7,8-tetrahydrofolate. The region spanning 216–377 (GMKVVIAGRP…LRNHLKQSMG (162 aa)) is the TrmE-type G domain. Residue asparagine 226 participates in K(+) binding. GTP-binding positions include 226–231 (NAGKSS), 245–251 (TDIAGTT), 270–273 (DTAG), 335–338 (NKAD), and 358–360 (SAR). Serine 230 provides a ligand contact to Mg(2+). K(+) contacts are provided by threonine 245, isoleucine 247, and threonine 250. Threonine 251 is a binding site for Mg(2+). Position 454 (lysine 454) interacts with (6S)-5-formyl-5,6,7,8-tetrahydrofolate.

The protein belongs to the TRAFAC class TrmE-Era-EngA-EngB-Septin-like GTPase superfamily. TrmE GTPase family. As to quaternary structure, homodimer. Heterotetramer of two MnmE and two MnmG subunits. K(+) serves as cofactor.

It is found in the cytoplasm. Functionally, exhibits a very high intrinsic GTPase hydrolysis rate. Involved in the addition of a carboxymethylaminomethyl (cmnm) group at the wobble position (U34) of certain tRNAs, forming tRNA-cmnm(5)s(2)U34. This chain is tRNA modification GTPase MnmE, found in Shigella sonnei (strain Ss046).